The chain runs to 406 residues: Peptidase T (406 aa).

H78 provides a ligand contact to Zn(2+). The active site involves D80. D139 serves as a coordination point for Zn(2+). E173 serves as the catalytic Proton acceptor. Residues E174, D196, and H378 each coordinate Zn(2+).

This sequence belongs to the peptidase M20B family. The cofactor is Zn(2+).

The protein resides in the cytoplasm. It carries out the reaction Release of the N-terminal residue from a tripeptide.. Cleaves the N-terminal amino acid of tripeptides. The protein is Peptidase T of Clostridium perfringens (strain 13 / Type A).